The sequence spans 74 residues: Putative defensin-like protein 27 (74 aa).

Positions 1 to 19 (MVHPRFVFFAFLALSVLLA) are cleaved as a signal peptide. 4 disulfide bridges follow: cysteine 36–cysteine 74, cysteine 46–cysteine 65, cysteine 51–cysteine 70, and cysteine 55–cysteine 72.

It belongs to the DEFL family.

It is found in the secreted. The chain is Putative defensin-like protein 27 from Arabidopsis thaliana (Mouse-ear cress).